The chain runs to 78 residues: Acyl carrier protein (78 aa).

The Carrier domain maps to 2–77; sequence SDTAERVKKI…DAVKYIEKAT (76 aa). O-(pantetheine 4'-phosphoryl)serine is present on Ser37.

This sequence belongs to the acyl carrier protein (ACP) family. Post-translationally, 4'-phosphopantetheine is transferred from CoA to a specific serine of apo-ACP by AcpS. This modification is essential for activity because fatty acids are bound in thioester linkage to the sulfhydryl of the prosthetic group.

Its subcellular location is the cytoplasm. The protein operates within lipid metabolism; fatty acid biosynthesis. Functionally, carrier of the growing fatty acid chain in fatty acid biosynthesis. The sequence is that of Acyl carrier protein from Chelativorans sp. (strain BNC1).